A 54-amino-acid chain; its full sequence is uncharacterized protein (54 aa).

Basic and acidic residues predominate over residues 1–28 (MDRKKDEIQRKYREQMREKKEREKEDGS). Positions 1-29 (MDRKKDEIQRKYREQMREKKEREKEDGSS) are disordered. A helical membrane pass occupies residues 31-51 (TFEIVVVLAIIILMFFFNSVF).

It is found in the cell membrane. This is an uncharacterized protein from Bacillus subtilis (strain 168).